The following is a 492-amino-acid chain: Ribose import ATP-binding protein RbsA (492 aa).

2 ABC transporter domains span residues 3 to 239 and 249 to 492; these read IEMK…VGRS and AEIR…TGGK. 35–42 contacts ATP; the sequence is GENGAGKS.

Belongs to the ABC transporter superfamily. Ribose importer (TC 3.A.1.2.1) family. The complex is composed of an ATP-binding protein (RbsA), two transmembrane proteins (RbsC) and a solute-binding protein (RbsB).

It is found in the cell membrane. It carries out the reaction D-ribose(out) + ATP + H2O = D-ribose(in) + ADP + phosphate + H(+). In terms of biological role, part of the ABC transporter complex RbsABC involved in ribose import. Responsible for energy coupling to the transport system. The sequence is that of Ribose import ATP-binding protein RbsA from Lactococcus lactis subsp. cremoris (strain SK11).